The chain runs to 430 residues: N-lysine methyltransferase SMYD2-B (430 aa).

The SET domain maps to 5–239 (EGLERFDSPG…AGEEVFTSYI (235 aa)). 15 to 17 (KGR) contributes to the S-adenosyl-L-methionine binding site. Residues C50, C53, C63, C66, C72, C76, H84, and C88 each coordinate Zn(2+). The MYND-type zinc-finger motif lies at 50–88 (CDFCFTRKEGLSKCGKCKQAFYCNVDCQKGDWPMHKLEC). S-adenosyl-L-methionine-binding positions include H135, 204 to 205 (NH), and 256 to 258 (YFF).

The protein belongs to the class V-like SAM-binding methyltransferase superfamily.

It localises to the cytoplasm. The protein resides in the cytosol. Its subcellular location is the nucleus. It catalyses the reaction L-lysyl(4)-[histone H3] + 3 S-adenosyl-L-methionine = N(6),N(6),N(6)-trimethyl-L-lysyl(4)-[histone H3] + 3 S-adenosyl-L-homocysteine + 3 H(+). It carries out the reaction L-lysyl-[protein] + S-adenosyl-L-methionine = N(6)-methyl-L-lysyl-[protein] + S-adenosyl-L-homocysteine + H(+). Protein-lysine N-methyltransferase that methylates both histones and non-histone proteins, including p53/TP53 and RB1. Specifically trimethylates histone H3 'Lys-4' (H3K4me3) in vivo. The activity requires interaction with HSP90alpha. Shows even higher methyltransferase activity on p53/TP53. Monomethylates 'Lys-370' of p53/TP53, leading to decreased DNA-binding activity and subsequent transcriptional regulation activity of p53/TP53. Monomethylates RB1 at 'Lys-860'. This Xenopus laevis (African clawed frog) protein is N-lysine methyltransferase SMYD2-B (smyd2-b).